The chain runs to 307 residues: UDP-3-O-acyl-N-acetylglucosamine deacetylase (307 aa).

3 residues coordinate Zn(2+): His78, His241, and Asp245. The Proton donor role is filled by His268.

The protein belongs to the LpxC family. Zn(2+) is required as a cofactor.

The catalysed reaction is a UDP-3-O-[(3R)-3-hydroxyacyl]-N-acetyl-alpha-D-glucosamine + H2O = a UDP-3-O-[(3R)-3-hydroxyacyl]-alpha-D-glucosamine + acetate. It functions in the pathway glycolipid biosynthesis; lipid IV(A) biosynthesis; lipid IV(A) from (3R)-3-hydroxytetradecanoyl-[acyl-carrier-protein] and UDP-N-acetyl-alpha-D-glucosamine: step 2/6. Catalyzes the hydrolysis of UDP-3-O-myristoyl-N-acetylglucosamine to form UDP-3-O-myristoylglucosamine and acetate, the committed step in lipid A biosynthesis. The protein is UDP-3-O-acyl-N-acetylglucosamine deacetylase of Acidovorax ebreus (strain TPSY) (Diaphorobacter sp. (strain TPSY)).